The sequence spans 471 residues: Microtubule-associated tyrosine carboxypeptidase 1 (471 aa).

2 disordered regions span residues 1–40 and 76–116; these read MVLD…PLYP and HMRR…LRPA. Histidine 280 contributes to the Zn(2+) binding site. The active-site Nucleophile is the glutamate 281. Positions 285 and 316 each coordinate Zn(2+).

This sequence belongs to the peptidase MATCAP family. It depends on Zn(2+) as a cofactor.

The protein resides in the cytoplasm. The protein localises to the cytoskeleton. It carries out the reaction C-terminal L-alpha-aminoacyl-L-glutamyl-L-glutamyl-L-tyrosyl-[tubulin] + H2O = C-terminal L-alpha-aminoacyl-L-glutamyl-L-glutamyl-[tubulin] + L-tyrosine. It catalyses the reaction C-terminal L-alpha-aminoacyl-L-glutamyl-L-glutamyl-L-phenylalanyl-[tubulin] + H2O = C-terminal L-alpha-aminoacyl-L-glutamyl-L-glutamyl-[tubulin] + L-phenylalanine. In terms of biological role, tyrosine carboxypeptidase that removes the C-terminal tyrosine residue of alpha-tubulin, thereby regulating microtubule dynamics and function. Also able to remove the C-terminal phenylalanine residue of alpha-tubulin TUBA8. Recognizes adjacent tubulin dimers along the same protofilament. The sequence is that of Microtubule-associated tyrosine carboxypeptidase 1 from Homo sapiens (Human).